The chain runs to 446 residues: Methionine aminopeptidase 2 (446 aa).

The segment at 1 to 91 (MAAQVTDALK…PPRVLLSNLF (91 aa)) is disordered. Residues 36 to 48 (EAEDSDDEEEEPV) are compositionally biased toward acidic residues. Residues 59–72 (KKKRKRKKKPKKKA) show a composition bias toward basic residues. His199 serves as a coordination point for substrate. Positions 219, 230, and 299 each coordinate a divalent metal cation. His307 lines the substrate pocket. A divalent metal cation contacts are provided by Glu332 and Glu427.

It belongs to the peptidase M24A family. Methionine aminopeptidase eukaryotic type 2 subfamily. The cofactor is Co(2+). Zn(2+) is required as a cofactor. Mn(2+) serves as cofactor. Requires Fe(2+) as cofactor.

It localises to the cytoplasm. The enzyme catalyses Release of N-terminal amino acids, preferentially methionine, from peptides and arylamides.. In terms of biological role, cotranslationally removes the N-terminal methionine from nascent proteins. The N-terminal methionine is often cleaved when the second residue in the primary sequence is small and uncharged (Met-Ala-, Cys, Gly, Pro, Ser, Thr, or Val). This chain is Methionine aminopeptidase 2, found in Sclerotinia sclerotiorum (strain ATCC 18683 / 1980 / Ss-1) (White mold).